The chain runs to 746 residues: Protein Niban 2 (746 aa).

Gly-2 is lipidated: N-myristoyl glycine. Residues 68 to 192 (RIVFSGNLFQ…WQAVLQDCIR (125 aa)) form the PH domain. 4 positions are modified to phosphoserine: Ser-568, Ser-574, Ser-601, and Ser-603. The disordered stretch occupies residues 590 to 746 (GEEYSNSGGG…EDSAGVQTEF (157 aa)). Thr-606 carries the post-translational modification Phosphothreonine. A phosphoserine mark is found at Ser-609, Ser-624, Ser-638, Ser-641, Ser-646, Ser-665, Ser-681, Ser-692, and Ser-696. The span at 671 to 693 (PLLNGAPAGESPQPKAAPEASSP) shows a compositional bias: low complexity. Residues 720 to 746 (GEQVSSPSSHPALHTTTEDSAGVQTEF) are compositionally biased toward polar residues.

The protein belongs to the Niban family. Phosphorylated at Ser-641, Ser-646, Ser-692 and Ser-696 by the BRAF/MKK/ERK signaling cascade. In melanoma cells, the C-terminal phosphorylation may prevent targeting to the plasma membrane. Post-translationally, as apoptosis proceeds, degraded via an proteasome-independent pathway, probably by caspases.

It is found in the cytoplasm. Its subcellular location is the cytosol. The protein localises to the cell junction. It localises to the adherens junction. The protein resides in the membrane. In terms of biological role, may play a role in apoptosis suppression. May promote melanoma cell invasion in vitro. The polypeptide is Protein Niban 2 (Homo sapiens (Human)).